The sequence spans 431 residues: Glutamate-1-semialdehyde 2,1-aminomutase (431 aa).

Residue Lys-265 is modified to N6-(pyridoxal phosphate)lysine.

This sequence belongs to the class-III pyridoxal-phosphate-dependent aminotransferase family. HemL subfamily. As to quaternary structure, homodimer. It depends on pyridoxal 5'-phosphate as a cofactor.

Its subcellular location is the cytoplasm. It catalyses the reaction (S)-4-amino-5-oxopentanoate = 5-aminolevulinate. The protein operates within porphyrin-containing compound metabolism; protoporphyrin-IX biosynthesis; 5-aminolevulinate from L-glutamyl-tRNA(Glu): step 2/2. The protein is Glutamate-1-semialdehyde 2,1-aminomutase of Vibrio atlanticus (strain LGP32) (Vibrio splendidus (strain Mel32)).